The primary structure comprises 318 residues: Homoserine kinase (318 aa).

Residue 97–107 participates in ATP binding; that stretch reads PIGSGLGSSAC.

Belongs to the GHMP kinase family. Homoserine kinase subfamily.

It localises to the cytoplasm. It catalyses the reaction L-homoserine + ATP = O-phospho-L-homoserine + ADP + H(+). Its pathway is amino-acid biosynthesis; L-threonine biosynthesis; L-threonine from L-aspartate: step 4/5. Its function is as follows. Catalyzes the ATP-dependent phosphorylation of L-homoserine to L-homoserine phosphate. This Photobacterium profundum (strain SS9) protein is Homoserine kinase.